The primary structure comprises 486 residues: Inosine-5'-monophosphate dehydrogenase (486 aa).

CBS domains follow at residues 99-154 (IVED…LVKE) and 156-215 (MTKE…VRDE). NAD(+) contacts are provided by residues aspartate 247 and 294-296 (GIG). Glycine 296 and glycine 298 together coordinate K(+). Position 299 (serine 299) interacts with IMP. Cysteine 301 provides a ligand contact to K(+). Cysteine 301 functions as the Thioimidate intermediate in the catalytic mechanism. IMP-binding positions include 334 to 336 (DGG), 357 to 358 (GN), and 381 to 385 (YRGMG). The Proton acceptor role is filled by arginine 397. Glutamate 412 contacts IMP. K(+)-binding residues include glutamate 466, serine 467, and histidine 468.

It belongs to the IMPDH/GMPR family. In terms of assembly, homotetramer. K(+) serves as cofactor.

It catalyses the reaction IMP + NAD(+) + H2O = XMP + NADH + H(+). It functions in the pathway purine metabolism; XMP biosynthesis via de novo pathway; XMP from IMP: step 1/1. With respect to regulation, mycophenolic acid (MPA) is a non-competitive inhibitor that prevents formation of the closed enzyme conformation by binding to the same site as the amobile flap. In contrast, mizoribine monophosphate (MZP) is a competitive inhibitor that induces the closed conformation. MPA is a potent inhibitor of mammalian IMPDHs but a poor inhibitor of the bacterial enzymes. MZP is a more potent inhibitor of bacterial IMPDH. Functionally, catalyzes the conversion of inosine 5'-phosphate (IMP) to xanthosine 5'-phosphate (XMP), the first committed and rate-limiting step in the de novo synthesis of guanine nucleotides, and therefore plays an important role in the regulation of cell growth. This is Inosine-5'-monophosphate dehydrogenase from Pyrococcus horikoshii (strain ATCC 700860 / DSM 12428 / JCM 9974 / NBRC 100139 / OT-3).